Consider the following 386-residue polypeptide: Ribosomal RNA small subunit methyltransferase H (386 aa).

Residues 97–99 (GGH), D116, Y143, D167, and Q174 each bind S-adenosyl-L-methionine.

Belongs to the methyltransferase superfamily. RsmH family.

Its subcellular location is the cytoplasm. It catalyses the reaction cytidine(1402) in 16S rRNA + S-adenosyl-L-methionine = N(4)-methylcytidine(1402) in 16S rRNA + S-adenosyl-L-homocysteine + H(+). Functionally, specifically methylates the N4 position of cytidine in position 1402 (C1402) of 16S rRNA. This Mycobacterium avium (strain 104) protein is Ribosomal RNA small subunit methyltransferase H.